The following is a 167-amino-acid chain: Fimbrial adapter PapF (167 aa).

The signal sequence occupies residues 1–18 (MIRLSLFISLLLTSVAVL).

The protein resides in the secreted. It is found in the fimbrium. Its function is as follows. Adapter that links the PapG adhesin to the distal end of the tip fibrillum. PapF is required for the correct presentation of the adhesin at the distal end of the tip fibrillum. Pili are polar filaments radiating from the surface of the bacterium to a length of 0.5-1.5 micrometers and numbering 100-300 per cell, and enable bacteria to colonize the epithelium of specific host organs. This is Fimbrial adapter PapF (papF) from Escherichia coli.